The primary structure comprises 907 residues: Polyphosphoinositide phosphatase (907 aa).

Residues 154–547 (FQNVDLSSNF…GDTLSLQYGG (394 aa)) enclose the SAC domain. Residues 707-790 (GIDPSPFTVR…MTDTGDSAKA (84 aa)) are disordered. Over residues 758-770 (SEDDSGTDREDEG) the composition is skewed to acidic residues.

Component of the PI(3,5)P2 regulatory complex/PAS complex, at least composed of PIKFYVE, FIG4 and VAC14. VAC14 nucleates the assembly of the complex and serves as a scaffold by pentamerizing into a star-shaped structure, which can bind a single copy each of PIKFYVE and FIG4 and coordinates their activities. As to expression, wide-spread.

It is found in the endosome membrane. It catalyses the reaction a 1,2-diacyl-sn-glycero-3-phospho-(1D-myo-inositol-3,5-bisphosphate) + H2O = a 1,2-diacyl-sn-glycero-3-phospho-(1D-myo-inositol-3-phosphate) + phosphate. It carries out the reaction a 1,2-diacyl-sn-glycero-3-phospho-(1D-myo-inositol-4,5-bisphosphate) + H2O = a 1,2-diacyl-sn-glycero-3-phospho-(1D-myo-inositol 4-phosphate) + phosphate. The catalysed reaction is a 1,2-diacyl-sn-glycero-3-phospho-(1D-myo-inositol-3,4,5-trisphosphate) + H2O = a 1,2-diacyl-sn-glycero-3-phospho-(1D-myo-inositol-3,4-bisphosphate) + phosphate. The enzyme catalyses O-phospho-L-seryl-[protein] + H2O = L-seryl-[protein] + phosphate. In terms of biological role, the PI(3,5)P2 regulatory complex regulates both the synthesis and turnover of phosphatidylinositol 3,5-bisphosphate (PtdIns(3,5)P2). In vitro, hydrolyzes all three D5-phosphorylated polyphosphoinositide substrates in the order PtdIns(4,5)P2 &gt; PtdIns(3,5)P2 &gt; PtdIns(3,4,5)P3. Plays a role in the biogenesis of endosome carrier vesicles (ECV) / multivesicular bodies (MVB) transport intermediates from early endosomes. Its function is as follows. Dual specificity phosphatase component of the PI(3,5)P2 regulatory complex which regulates both the synthesis and turnover of phosphatidylinositol 3,5-bisphosphate (PtdIns(3,5)P2). Catalyzes the dephosphorylation of phosphatidylinositol 3,5-bisphosphate (PtdIns(3,5)P2) to form phosphatidylinositol 3-phosphate. Has serine-protein phosphatase activity acting on PIKfyve to stimulate its lipid kinase activity, its catalytically activity being required for maximal PI(3,5)P2 production. In vitro, hydrolyzes all three D5-phosphorylated polyphosphoinositide and although displaying preferences for PtdIns(3,5)P2, it is capable of hydrolyzing PtdIns(3,4,5)P3 and PtdIns(4,5)P2, at least in vitro. This is Polyphosphoinositide phosphatase (Fig4) from Mus musculus (Mouse).